A 415-amino-acid chain; its full sequence is Succinate--CoA ligase [GDP-forming] subunit beta, mitochondrial (415 aa).

The transit peptide at methionine 1–phenylalanine 19 directs the protein to the mitochondrion. The region spanning lysine 28–phenylalanine 258 is the ATP-grasp domain. GTP-binding positions include glutamine 39, glycine 72 to glycine 74, and valine 130. Residues asparagine 227 and aspartate 241 each contribute to the Mg(2+) site. Residues asparagine 292 and glycine 349–valine 351 each bind substrate.

The protein belongs to the succinate/malate CoA ligase beta subunit family. GTP-specific subunit beta subfamily. In terms of assembly, heterodimer of an alpha and a beta subunit. The beta subunit determines specificity for GTP. It depends on Mg(2+) as a cofactor.

The protein resides in the mitochondrion. It carries out the reaction GTP + succinate + CoA = succinyl-CoA + GDP + phosphate. It functions in the pathway carbohydrate metabolism; tricarboxylic acid cycle; succinate from succinyl-CoA (ligase route): step 1/1. Its function is as follows. GTP-specific succinyl-CoA synthetase functions in the citric acid cycle (TCA), coupling the hydrolysis of succinyl-CoA to the synthesis of GTP and thus represents the only step of substrate-level phosphorylation in the TCA. The beta subunit provides nucleotide specificity of the enzyme and binds the substrate succinate, while the binding sites for coenzyme A and phosphate are found in the alpha subunit. The polypeptide is Succinate--CoA ligase [GDP-forming] subunit beta, mitochondrial (Caenorhabditis elegans).